Reading from the N-terminus, the 46-residue chain is Crambin (46 aa).

Intrachain disulfides connect Cys-3/Cys-40, Cys-4/Cys-32, and Cys-16/Cys-26.

It belongs to the plant thionin (TC 1.C.44) family.

It is found in the secreted. In terms of biological role, the function of this hydrophobic plant seed protein is not known. The protein is Crambin (THI2) of Crambe hispanica subsp. abyssinica (Abyssinian kale).